The sequence spans 112 residues: Small ribosomal subunit protein bS6 (112 aa).

This sequence belongs to the bacterial ribosomal protein bS6 family.

Functionally, binds together with bS18 to 16S ribosomal RNA. This chain is Small ribosomal subunit protein bS6, found in Chlamydia abortus (strain DSM 27085 / S26/3) (Chlamydophila abortus).